Consider the following 519-residue polypeptide: Importin subunit alpha-5 (519 aa).

In terms of domain architecture, IBB spans 1-58 (MSLRPSTKTEIRRIRYKVSVDAEEGRRRREDFLVEIRKSKRNENLMKKRRVKVLPPDY). ARM repeat units lie at residues 103–143 (SPPT…NIAS), 146–185 (SEHT…NVAG), 188–228 (IQCR…NFFR), 230–269 (KPSP…NLSD), 272–311 (NENI…NIVS), 314–354 (SQQT…NITA), 357–396 (EEQI…NASV), and 400–439 (PNQI…MILI).

It belongs to the importin alpha family. Forms a complex with importin subunit beta-1.

It localises to the nucleus envelope. Its function is as follows. Binds to conventional NLS motifs and mediates nuclear protein import across the nuclear envelope. This Arabidopsis thaliana (Mouse-ear cress) protein is Importin subunit alpha-5.